The sequence spans 232 residues: uncharacterized protein (232 aa).

A signal peptide spans M1–A32.

This is an uncharacterized protein from Mycobacterium bovis (strain ATCC BAA-935 / AF2122/97).